A 397-amino-acid chain; its full sequence is uncharacterized protein (397 aa).

This is an uncharacterized protein from Methanocaldococcus jannaschii (strain ATCC 43067 / DSM 2661 / JAL-1 / JCM 10045 / NBRC 100440) (Methanococcus jannaschii).